Reading from the N-terminus, the 172-residue chain is C-phycocyanin beta chain (172 aa).

Asn-72 bears the N4-methylasparagine mark. Residues Cys-82 and Cys-153 each coordinate (2R,3E)-phycocyanobilin.

This sequence belongs to the phycobiliprotein family. Heterodimer of an alpha and a beta subunit, which further assembles into trimers and the trimers into hexamers. The basic functional unit of phycobiliproteins is a ring-shaped hexamer formed from two back-to-back trimers contacting via the alpha chain subunits. The trimers are composed of alpha/beta subunit heterodimers arranged around a three-fold axis of symmetry. The phycoerythrins also contain a gamma subunit which is located in the center of the hexamer. Post-translationally, contains two covalently linked bilin chromophores.

Its subcellular location is the plastid. The protein localises to the chloroplast thylakoid membrane. In terms of biological role, light-harvesting photosynthetic bile pigment-protein from the phycobiliprotein complex (phycobilisome, PBS). Phycocyanin is the major phycobiliprotein in the PBS rod. The protein is C-phycocyanin beta chain (cpcB) of Aglaothamnion neglectum (Red alga).